Reading from the N-terminus, the 479-residue chain is Preferentially expressed antigen in melanoma-like protein 7 (479 aa).

The stretch at 96 to 124 (MGRLKKVDFRDAQHHASLDMQDEREGRDY) is one LRR 1; degenerate repeat. An LRR 2; degenerate repeat occupies 179-203 (HLCCEKLEIGAVEVSKVRNVLKFLQ). One copy of the LRR 3; degenerate repeat lies at 204–230 (PELIKELKLNTVGNLSKLAKFVPFIRK). One copy of the LRR 4; degenerate repeat lies at 231 to 265 (MRNLQKLMLVRTFGTRTFTQEEKQNISKIISLFCK). LRR repeat units lie at residues 266–291 (LSCL…LRCL), 292–323 (EAPL…SQLK), 324–347 (HLCL…LKRV), 348–375 (AANL…ALIK), and 376–400 (CTQL…FLHR).

This sequence belongs to the PRAME family. As to quaternary structure, interacts with UHRF1. In terms of tissue distribution, seems to be specific to pluripotent tissues in the early embryo. Not detected in somatic tissues.

In terms of biological role, promotes maintenance and self-renewal of pluripotent embryonic stem cells (ESCs), downstream of LIF/STAT3. Maintains the pluripotency state of ESCs by repressing DNA methylation through the regulation of UHRF1 stability. Mediates the proteasomal degradation of UHRF1. Is required for the establishment of the blastocyst. The chain is Preferentially expressed antigen in melanoma-like protein 7 from Mus musculus (Mouse).